A 636-amino-acid polypeptide reads, in one-letter code: Poly(3-hydroxyalkanoate) polymerase subunit PhaC (636 aa).

2 disordered regions span residues 1–38 (MYNKRIKRVLPPEEMVTDSKQESGGQKNGDKTGFDATD) and 129–152 (QGTRGMQGEPLPPEPDTRKDKRFS). The segment covering 143-152 (PDTRKDKRFS) has biased composition (basic and acidic residues). Cysteine 373 is a catalytic residue.

It belongs to the PHA/PHB synthase family. Type I PhaC subfamily.

The protein resides in the cytoplasm. It carries out the reaction (3R)-3-hydroxybutanoyl-CoA + [(3R)-hydroxybutanoate](n) = [(3R)-hydroxybutanoate](n+1) + CoA. It participates in biopolymer metabolism; poly-(R)-3-hydroxybutanoate biosynthesis. Functionally, polymerizes D(-)-3-hydroxybutyryl-CoA to create PHB which consists of thousands of hydroxybutyrate molecules linked end to end. PHB serves as an intracellular energy reserve material when cells grow under conditions of nutrient limitation. The sequence is that of Poly(3-hydroxyalkanoate) polymerase subunit PhaC from Rhizobium etli (strain ATCC 51251 / DSM 11541 / JCM 21823 / NBRC 15573 / CFN 42).